Here is a 105-residue protein sequence, read N- to C-terminus: Large ribosomal subunit protein bL21c (105 aa).

This sequence belongs to the bacterial ribosomal protein bL21 family. Part of the 50S ribosomal subunit.

It is found in the plastid. The protein localises to the chloroplast. Functionally, this protein binds to 23S rRNA. The sequence is that of Large ribosomal subunit protein bL21c from Thalassiosira pseudonana (Marine diatom).